The following is a 185-amino-acid chain: Ribosome-recycling factor (185 aa).

This sequence belongs to the RRF family.

The protein resides in the cytoplasm. Responsible for the release of ribosomes from messenger RNA at the termination of protein biosynthesis. May increase the efficiency of translation by recycling ribosomes from one round of translation to another. The polypeptide is Ribosome-recycling factor (Alteromonas mediterranea (strain DSM 17117 / CIP 110805 / LMG 28347 / Deep ecotype)).